Reading from the N-terminus, the 335-residue chain is Protein-arginine kinase (335 aa).

One can recognise a Phosphagen kinase C-terminal domain in the interval 20–243 (IVMSSRIRLA…QQIINEEMQI (224 aa)). Residues 23-27 (SSRIR), His-81, Arg-114, 165-169 (RASVM), and 196-201 (RGIYGE) contribute to the ATP site.

This sequence belongs to the ATP:guanido phosphotransferase family.

It carries out the reaction L-arginyl-[protein] + ATP = N(omega)-phospho-L-arginyl-[protein] + ADP + H(+). In terms of biological role, catalyzes the specific phosphorylation of arginine residues in proteins. The chain is Protein-arginine kinase from Staphylococcus haemolyticus (strain JCSC1435).